The chain runs to 379 residues: MTESANRALLPAGLRDMLPPDAEFEASVVHSLMSMFARHGYDRVKPPLIEFEESLLDGAGGGTSSQTFRVMDPMSQKMMGLRADMTPQVARIAATRLGSQPRPLRLSYAGQVLRVKGTQLRPERQFGQAGIELIGSDDAGADAEVLVMTAEALDDLGVPGVSADLALPTLVPAVFAAYGINGETADRLRAALDHKDSATVAAQGGAAAPLLQALIAAAGPAARALAELCALDLPPAAAAERDRLARVVELAGADLPSLTLTVDPVENRGFEYHTGLSFTLFARNMGAELGRGGRYQGGGGEPATGATLFMDSVLAALPGPKPAKRLFVPAGTPRAWAQAFRAQGWVTVSGLDPAADPQVEAKHQGCRHRLGPDGIVEVE.

The protein belongs to the class-II aminoacyl-tRNA synthetase family. HisZ subfamily. Heteromultimer composed of HisG and HisZ subunits.

The protein localises to the cytoplasm. It participates in amino-acid biosynthesis; L-histidine biosynthesis; L-histidine from 5-phospho-alpha-D-ribose 1-diphosphate: step 1/9. Required for the first step of histidine biosynthesis. May allow the feedback regulation of ATP phosphoribosyltransferase activity by histidine. In Paramagnetospirillum magneticum (strain ATCC 700264 / AMB-1) (Magnetospirillum magneticum), this protein is ATP phosphoribosyltransferase regulatory subunit.